Reading from the N-terminus, the 212-residue chain is Uracil-DNA glycosylase (212 aa).

Aspartate 59 acts as the Proton acceptor in catalysis.

Belongs to the uracil-DNA glycosylase (UDG) superfamily. UNG family.

It is found in the cytoplasm. The catalysed reaction is Hydrolyzes single-stranded DNA or mismatched double-stranded DNA and polynucleotides, releasing free uracil.. In terms of biological role, excises uracil residues from the DNA which can arise as a result of misincorporation of dUMP residues by DNA polymerase or due to deamination of cytosine. The protein is Uracil-DNA glycosylase of Ureaplasma urealyticum serovar 10 (strain ATCC 33699 / Western).